A 456-amino-acid polypeptide reads, in one-letter code: Yersinopine synthase (456 aa).

NADP(+)-binding positions include 12 to 15 (AGPA), 35 to 40 (NRPSTK), and threonine 154. Residue histidine 242 is the Proton donor/acceptor of the active site.

Belongs to the staphylopine dehydrogenase family. As to quaternary structure, homodimer.

It carries out the reaction yersinopine + NADP(+) + H2O = (2S)-2-amino-4-{[(1S)-1-carboxy-2-(1H-imidazol-4-yl)ethyl]amino}butanoate + pyruvate + NADPH + H(+). Its function is as follows. Catalyzes the NADPH-dependent reductive condensation of pyruvate to the intermediate formed by the adjacently encoded enzyme y2836, namely (2S)-2-amino-4-{[(1S)-1-carboxy-2-(1H-imidazol-4-yl)ethyl]amino}butanoate, leading to the production of yersinopine. This is the last step in the biosynthesis of the metallophore yersinopine, which is involved in metal acquisition and thus enables bacterial growth inside the host, where metal access is limited. Therefore, this enzyme probably contributes to Yersinia virulence. Cannot use alpha-ketoglutarate in place of pyruvate, and displays only poor efficiency with oxaloacetate and glyoxylate. The sequence is that of Yersinopine synthase from Yersinia pestis.